Consider the following 222-residue polypeptide: DUF1769 family protein (222 aa).

The protein belongs to the UPF0590 family.

It is found in the cytoplasm. Its subcellular location is the nucleus. In Schizosaccharomyces pombe (strain 972 / ATCC 24843) (Fission yeast), this protein is DUF1769 family protein.